We begin with the raw amino-acid sequence, 85 residues long: Large ribosomal subunit protein bL27 (85 aa).

A disordered region spans residues 1–20; it reads MATKKAGGSTRNGRDSEAKR.

This sequence belongs to the bacterial ribosomal protein bL27 family.

The polypeptide is Large ribosomal subunit protein bL27 (Actinobacillus pleuropneumoniae serotype 5b (strain L20)).